The chain runs to 443 residues: Nuclear pore complex-interacting protein family member B15 (443 aa).

The first 18 residues, 1 to 18 (MRLRFWLLIWLLLGFISH), serve as a signal peptide directing secretion. Asparagine 111 is a glycosylation site (N-linked (GlcNAc...) asparagine). Disordered stretches follow at residues 242–262 (RMGRQPPPPTQQHSITDNSLS) and 330–413 (SPLP…TRHC). The span at 252 to 262 (QQHSITDNSLS) shows a compositional bias: polar residues. The span at 351 to 393 (EAEKPPKPKRWRVDEVEQSPKPKRRRADEVEQSPKPKRQREAE) shows a compositional bias: basic and acidic residues. A compositionally biased stretch (basic residues) spans 399 to 412 (KPKRRRLSKLRTRH).

Belongs to the NPIP family.

It localises to the secreted. The polypeptide is Nuclear pore complex-interacting protein family member B15 (NPIPB15) (Homo sapiens (Human)).